The primary structure comprises 508 residues: Photosystem II CP47 reaction center protein (508 aa).

The next 6 membrane-spanning stretches (helical) occupy residues 21 to 36 (SVHI…WAGS), 101 to 115 (IVFS…IWHW), 140 to 156 (GIHL…SGAF), 203 to 218 (IAAG…FHLS), 237 to 252 (VLSS…AFIV), and 457 to 472 (TFAL…HGAR).

It belongs to the PsbB/PsbC family. PsbB subfamily. PSII is composed of 1 copy each of membrane proteins PsbA, PsbB, PsbC, PsbD, PsbE, PsbF, PsbH, PsbI, PsbJ, PsbK, PsbL, PsbM, PsbT, PsbX, PsbY, PsbZ, Psb30/Ycf12, at least 3 peripheral proteins of the oxygen-evolving complex and a large number of cofactors. It forms dimeric complexes. The cofactor is Binds multiple chlorophylls. PSII binds additional chlorophylls, carotenoids and specific lipids..

It localises to the plastid. It is found in the chloroplast thylakoid membrane. Its function is as follows. One of the components of the core complex of photosystem II (PSII). It binds chlorophyll and helps catalyze the primary light-induced photochemical processes of PSII. PSII is a light-driven water:plastoquinone oxidoreductase, using light energy to abstract electrons from H(2)O, generating O(2) and a proton gradient subsequently used for ATP formation. The protein is Photosystem II CP47 reaction center protein of Cycas taitungensis (Prince sago).